Here is a 63-residue protein sequence, read N- to C-terminus: Large ribosomal subunit protein bL35 (63 aa).

2 stretches are compositionally biased toward basic residues: residues 1–25 and 32–47; these read MPKMKSKSSAAKRFKKTANGFKHRQ and LTKKSTKRKRHLRPKK. The segment at 1 to 55 is disordered; sequence MPKMKSKSSAAKRFKKTANGFKHRQSFTSHILTKKSTKRKRHLRPKKQVNPSDVP.

This sequence belongs to the bacterial ribosomal protein bL35 family.

The protein is Large ribosomal subunit protein bL35 of Hahella chejuensis (strain KCTC 2396).